A 512-amino-acid chain; its full sequence is Histidine ammonia-lyase (512 aa).

The 5-imidazolinone (Ala-Gly) cross-link spans 141–143; the sequence is ASG. S142 carries the 2,3-didehydroalanine (Ser) modification.

This sequence belongs to the PAL/histidase family. Post-translationally, contains an active site 4-methylidene-imidazol-5-one (MIO), which is formed autocatalytically by cyclization and dehydration of residues Ala-Ser-Gly.

It localises to the cytoplasm. It catalyses the reaction L-histidine = trans-urocanate + NH4(+). It participates in amino-acid degradation; L-histidine degradation into L-glutamate; N-formimidoyl-L-glutamate from L-histidine: step 1/3. This is Histidine ammonia-lyase from Bacillus velezensis (strain DSM 23117 / BGSC 10A6 / LMG 26770 / FZB42) (Bacillus amyloliquefaciens subsp. plantarum).